The sequence spans 678 residues: RNA helicase NPH-II (678 aa).

The 177-residue stretch at 175-351 folds into the Helicase ATP-binding domain; it reads FTSWARRVPV…EFFAESVFVH (177 aa). 188–195 is an ATP binding site; that stretch reads GDTGVGKT. The DEXH box motif lies at 300 to 303; it reads DEVH. The region spanning 371-546 is the Helicase C-terminal domain; it reads PLNRFMYIEE…VFDLQLPEDL (176 aa).

This sequence belongs to the DEAD box helicase family. DEAH subfamily. As to quaternary structure, monomer.

Its subcellular location is the virion. It carries out the reaction ATP + H2O = ADP + phosphate + H(+). Its function is as follows. NTP-dependent helicase that catalyzes unidirectional unwinding of 3'tailed duplex RNAs and plays an important role during transcription of early mRNAs, presumably by preventing R-loop formation behind the elongating RNA polymerase. Might also play a role in the export of newly synthesized mRNA chains out of the core into the cytoplasm. Required for replication and propagation of viral particles. In Oryctolagus cuniculus (Rabbit), this protein is RNA helicase NPH-II (OPG084).